The sequence spans 492 residues: Xaa-Pro dipeptidase (492 aa).

Ala2 carries the post-translational modification N-acetylalanine. At Ser167 the chain carries Phosphoserine. His255 provides a ligand contact to a dipeptide. Positions 276, 287, and 370 each coordinate Mn(2+). Position 287 (Asp287) interacts with a dipeptide. Residues His377 and Arg398 each coordinate a dipeptide. Mn(2+)-binding residues include Glu412 and Glu452.

Belongs to the peptidase M24B family. Eukaryotic-type prolidase subfamily. Homodimer. Requires Mn(2+) as cofactor.

It carries out the reaction Xaa-L-Pro dipeptide + H2O = an L-alpha-amino acid + L-proline. Dipeptidase that catalyzes the hydrolysis of dipeptides with a prolyl (Xaa-Pro) or hydroxyprolyl residue in the C-terminal position. The preferred dipeptide substrate is Gly-Pro, but other Xaa-Pro dipeptides, such as Ala-Pro, Met-Pro, Phe-Pro, Val-Pro and Leu-Pro, can be cleaved. Plays an important role in collagen metabolism because the high level of iminoacids in collagen. This is Xaa-Pro dipeptidase (Pepd) from Rattus norvegicus (Rat).